Here is a 218-residue protein sequence, read N- to C-terminus: Eukaryotic translation initiation factor 3 subunit K (218 aa).

Ala-2 is subject to N-acetylalanine. Residue Thr-28 is modified to Phosphothreonine. A PCI domain is found at Tyr-42–Lys-204. Residue Ser-217 is modified to Phosphoserine.

As to quaternary structure, component of the eukaryotic translation initiation factor 3 (eIF-3) complex, which is composed of 13 subunits: EIF3A, EIF3B, EIF3C, EIF3D, EIF3E, EIF3F, EIF3G, EIF3H, EIF3I, EIF3J, EIF3K, EIF3L and EIF3M. The eIF-3 complex appears to include 3 stable modules: module A is composed of EIF3A, EIF3B, EIF3G and EIF3I; module B is composed of EIF3F, EIF3H, and EIF3M; and module C is composed of EIF3C, EIF3D, EIF3E, EIF3K and EIF3L. EIF3C of module C binds EIF3B of module A and EIF3H of module B, thereby linking the three modules. EIF3J is a labile subunit that binds to the eIF-3 complex via EIF3B. The eIF-3 complex interacts with RPS6KB1 under conditions of nutrient depletion. Mitogenic stimulation leads to binding and activation of a complex composed of MTOR and RPTOR, leading to phosphorylation and release of RPS6KB1 and binding of EIF4B to eIF-3. Interacts with CCND3, but not with CCND1 and CCND2. Ubiquitous, with the highest levels of expression in brain, testis and kidney.

Its subcellular location is the nucleus. It localises to the cytoplasm. In terms of biological role, component of the eukaryotic translation initiation factor 3 (eIF-3) complex, which is required for several steps in the initiation of protein synthesis. The eIF-3 complex associates with the 40S ribosome and facilitates the recruitment of eIF-1, eIF-1A, eIF-2:GTP:methionyl-tRNAi and eIF-5 to form the 43S pre-initiation complex (43S PIC). The eIF-3 complex stimulates mRNA recruitment to the 43S PIC and scanning of the mRNA for AUG recognition. The eIF-3 complex is also required for disassembly and recycling of post-termination ribosomal complexes and subsequently prevents premature joining of the 40S and 60S ribosomal subunits prior to initiation. The eIF-3 complex specifically targets and initiates translation of a subset of mRNAs involved in cell proliferation, including cell cycling, differentiation and apoptosis, and uses different modes of RNA stem-loop binding to exert either translational activation or repression. This is Eukaryotic translation initiation factor 3 subunit K from Homo sapiens (Human).